Consider the following 441-residue polypeptide: MSEMTPREIVHELDTHIIGQHDAKRSVAIALRNRWRRMQLDVDFRQEVTPKNILMIGPTGVGKTEIARRLAKLAKAPFIKVEATKFTEVGYVGKEVEQIIRDLTDSAIKMTREDQMKKCKFKAEEAAEERILDALLPKPKEDWDNEKPDDSATRQIFRKKLREGQLDDKEIEIDVAAPQVGIEIMSPPGMEEMTNQLQSMFQNMGPGDSKRRKMPIKEAYKLMIEEEAAKLVNQDDMKEQAIELVEQHGIVFLDEIDKICKRGESSGPDVSREGVQRDLLPLVEGCTVNTKHGMVKTDHILFIASGAFQMSKPSDLIPELQGRLPIRVELSALTADDFKRILTEPHASLTEQHVAMMGTEDVKIEFTEDGIESIAQAAWQVNERTENIGARRLHTVMERLMEDLSYDASDKSGNTFVIDAEYVSSHLDDLVQDEDLSRFIL.

ATP-binding positions include isoleucine 18, 60-65 (GVGKTE), aspartate 254, glutamate 319, and arginine 391.

This sequence belongs to the ClpX chaperone family. HslU subfamily. In terms of assembly, a double ring-shaped homohexamer of HslV is capped on each side by a ring-shaped HslU homohexamer. The assembly of the HslU/HslV complex is dependent on binding of ATP.

It is found in the cytoplasm. ATPase subunit of a proteasome-like degradation complex; this subunit has chaperone activity. The binding of ATP and its subsequent hydrolysis by HslU are essential for unfolding of protein substrates subsequently hydrolyzed by HslV. HslU recognizes the N-terminal part of its protein substrates and unfolds these before they are guided to HslV for hydrolysis. The protein is ATP-dependent protease ATPase subunit HslU of Shewanella sediminis (strain HAW-EB3).